The following is a 192-amino-acid chain: uncharacterized protein (192 aa).

The Nudix hydrolase domain maps to 29 to 160; sequence HRQAAVLIPI…PLDIYRRGDS (132 aa). Residues 67–89 carry the Nudix box motif; sequence GAVDDTDTSVIAAALREAEEEVA. Mg(2+) contacts are provided by Glu83 and Glu87.

This sequence belongs to the Nudix hydrolase family. PCD1 subfamily. It depends on Mn(2+) as a cofactor. Mg(2+) serves as cofactor.

Its function is as follows. Probably mediates the hydrolysis of some nucleoside diphosphate derivatives. This is an uncharacterized protein from Escherichia fergusonii (strain ATCC 35469 / DSM 13698 / CCUG 18766 / IAM 14443 / JCM 21226 / LMG 7866 / NBRC 102419 / NCTC 12128 / CDC 0568-73).